A 305-amino-acid chain; its full sequence is Mitogen-activated protein kinase kinase 10 (305 aa).

At Ser-34 the chain carries Phosphoserine. The Protein kinase domain maps to 48–302 (LEKLSVLGQG…VEELLRHSFV (255 aa)). Residues 54–62 (LGQGSGGTV) and Lys-77 each bind ATP. The active-site Proton acceptor is the Asp-165. Thr-200 carries the post-translational modification Phosphothreonine.

This sequence belongs to the protein kinase superfamily. STE Ser/Thr protein kinase family. MAP kinase kinase subfamily. In terms of assembly, interacts with P.syringae type III effector HopF2.

It catalyses the reaction L-seryl-[protein] + ATP = O-phospho-L-seryl-[protein] + ADP + H(+). The catalysed reaction is L-threonyl-[protein] + ATP = O-phospho-L-threonyl-[protein] + ADP + H(+). The enzyme catalyses L-tyrosyl-[protein] + ATP = O-phospho-L-tyrosyl-[protein] + ADP + H(+). The sequence is that of Mitogen-activated protein kinase kinase 10 (MKK10) from Arabidopsis thaliana (Mouse-ear cress).